Reading from the N-terminus, the 196-residue chain is Nucleotide kinase gp1.7 (196 aa).

A disordered region spans residues 97–118; sequence PRKPHLNKPEVTPTDDQPSAET.

In terms of assembly, dodecamer.

It carries out the reaction dGMP + ATP = dGDP + ADP. It catalyses the reaction dTMP + ATP = dTDP + ADP. Functionally, nucleotide kinase that catalyzes the phosphorylation of dGMP and dTMP to dGDP and dTDP. A double mutation in this protein and the RecBCD inhibitor gp5.9 protein allow phage to overcome the retron Ec48 bacteriophage defense system. This protein alone when overexpressed in E.coli does not cause growth arrest; Y128C may be a silent mutation. The protein is Nucleotide kinase gp1.7 of Escherichia coli (Bacteriophage T7).